Here is a 596-residue protein sequence, read N- to C-terminus: Arginine--tRNA ligase (596 aa).

The short motif at 128–138 is the 'HIGH' region element; sequence ANPTSSLHVGH.

It belongs to the class-I aminoacyl-tRNA synthetase family. In terms of assembly, monomer.

The protein localises to the cytoplasm. The enzyme catalyses tRNA(Arg) + L-arginine + ATP = L-arginyl-tRNA(Arg) + AMP + diphosphate. The chain is Arginine--tRNA ligase from Acinetobacter baylyi (strain ATCC 33305 / BD413 / ADP1).